Reading from the N-terminus, the 624-residue chain is Chitin elicitor receptor kinase 1 (624 aa).

The N-terminal stretch at 1 to 18 (MEASTSLLVLVLAAAAFA) is a signal peptide. Over 19-240 (AGTVTEAAGD…SPGKGASAGA (222 aa)) the chain is Extracellular. Intrachain disulfides connect cysteine 30–cysteine 93, cysteine 34–cysteine 160, and cysteine 91–cysteine 158. Asparagine 48 carries N-linked (GlcNAc...) asparagine glycosylation. 115-121 (RGQIYTS) provides a ligand contact to chitin. Asparagine 128 carries an N-linked (GlcNAc...) asparagine glycan. 142–148 (PANNIPD) lines the chitin pocket. N-linked (GlcNAc...) asparagine glycosylation is found at asparagine 153 and asparagine 157. A LysM domain is found at 173–218 (LTYPLRAEDTLASVAATYGLSSQLDVVRRYNPGMESATGSGIVYIP). Asparagine 223 carries an N-linked (GlcNAc...) asparagine glycan. A helical membrane pass occupies residues 241–261 (IAGGVVAGVVVLAAIFLYIIF). At 262 to 624 (YRRRKAKQAT…QGLVNLMSGR (363 aa)) the chain is on the cytoplasmic side. The Protein kinase domain maps to 324 to 599 (FSIGNKIGQG…RSVVVALMTL (276 aa)). ATP is bound by residues 330-338 (IGQGGFGAV) and lysine 351. Residue aspartate 443 is the Proton acceptor of the active site.

Belongs to the protein kinase superfamily. Ser/Thr protein kinase family. As to quaternary structure, homooligomer. Interacts with CEBIP. Interacts with LYP4 and LYP6. Interacts with RLCK176. Autophosphorylated; induced by chitin and derivatives. As to expression, expressed in seedlings, roots, shoots and stems, and, to a lower extent, in flowers.

Its subcellular location is the cell membrane. It carries out the reaction L-seryl-[protein] + ATP = O-phospho-L-seryl-[protein] + ADP + H(+). It catalyses the reaction L-threonyl-[protein] + ATP = O-phospho-L-threonyl-[protein] + ADP + H(+). In terms of biological role, lysin motif (LysM) receptor kinase required as a cell surface receptor for chitin elicitor (chitooligosaccharides) signaling leading to innate immunity in response to biotic stresses. Involved in the resistance to pathogenic fungi, probably by sensing microbe-associated molecular patterns (MAMP) and pathogen-associated molecular patterns (PAMP). Involved in the detection of microbial peptidoglycans (PGNs) and mediates PGN response. Plays dual roles in PGN and chitin signaling during innate immunity. Acts as an adapter for LYP4 and LYP6 and mediates signal transduction from the extracellular to intracellular spaces. Participates in the activation of defense genes during response to PGN and chitin. Phosphorylates the downstream partner RLCK185 in response to chitin elicitation. In Oryza sativa subsp. japonica (Rice), this protein is Chitin elicitor receptor kinase 1.